Here is a 386-residue protein sequence, read N- to C-terminus: TGF-beta-activated kinase 1 and MAP3K7-binding protein 1 (386 aa).

The 306-residue stretch at 22–327 folds into the PPM-type phosphatase domain; sequence HSCRYSKQKN…EEMTVIYVKL (306 aa).

In terms of assembly, interacts with mom-4; the interaction enhances mom-4 kinase activity.

In terms of biological role, involved in the Wnt signaling pathway by regulating mom-4 kinase activity. This Caenorhabditis elegans protein is TGF-beta-activated kinase 1 and MAP3K7-binding protein 1.